We begin with the raw amino-acid sequence, 216 residues long: tRNA (guanine-N(7)-)-methyltransferase (216 aa).

The S-adenosyl-L-methionine site is built by Glu-43, Asp-68, Asn-95, and Asn-117. Residues Asp-153 and Thr-190–Glu-193 each bind substrate.

The protein belongs to the class I-like SAM-binding methyltransferase superfamily. TrmB family.

It carries out the reaction guanosine(46) in tRNA + S-adenosyl-L-methionine = N(7)-methylguanosine(46) in tRNA + S-adenosyl-L-homocysteine. The protein operates within tRNA modification; N(7)-methylguanine-tRNA biosynthesis. Its function is as follows. Catalyzes the formation of N(7)-methylguanine at position 46 (m7G46) in tRNA. This Desulfitobacterium hafniense (strain Y51) protein is tRNA (guanine-N(7)-)-methyltransferase.